The primary structure comprises 266 residues: Undecaprenyl-diphosphatase (266 aa).

The next 8 helical transmembrane spans lie at 1 to 21 (MDTLQVIILALIQGLTEFLPI), 39 to 59 (QGLSFDVAVHIGSLAAVVIYF), 83 to 103 (SKLAWWIILATIPAIGVGFTA), 111 to 131 (LRGPGVIAITTVIFGLLLWFA), 149 to 169 (ALLIGVAQALALIPGTSRSGI), 183 to 203 (AAARFSFLMSIPVILGAALLM), 218 to 238 (ALALGSILSFIAAYACIYFFL), and 246 to 266 (MTPFVIYRIALGVFLCGFIYL).

This sequence belongs to the UppP family.

It localises to the cell inner membrane. The enzyme catalyses di-trans,octa-cis-undecaprenyl diphosphate + H2O = di-trans,octa-cis-undecaprenyl phosphate + phosphate + H(+). Catalyzes the dephosphorylation of undecaprenyl diphosphate (UPP). Confers resistance to bacitracin. This Shewanella amazonensis (strain ATCC BAA-1098 / SB2B) protein is Undecaprenyl-diphosphatase.